The sequence spans 193 residues: 5'RNA triphosphatase A449R (193 aa).

Mn(2+) serves as cofactor.

The enzyme catalyses a 5'-end triphospho-ribonucleoside in mRNA + H2O = a 5'-end diphospho-ribonucleoside in mRNA + phosphate + H(+). Catalyzes the first stes of cap formation: by removing the gamma-phosphate from the 5'-triphosphate end of nascent mRNA to yield a diphosphate end. The polypeptide is 5'RNA triphosphatase A449R (A449R) (Chlorella (PBCV-1)).